Here is a 154-residue protein sequence, read N- to C-terminus: Host transcription reprogramming factor 5 (154 aa).

The N-terminal stretch at 1-19 (MQILRIAQLMALLATCASA) is a signal peptide. Residues 24-85 (TGSRVYSRDV…KRIKAEQNAR (62 aa)) are disordered. Residues 35 to 50 (QTQGGFSGSPTTNSPD) show a composition bias toward polar residues. The span at 69-85 (ETEKERKKRIKAEQNAR) shows a compositional bias: basic and acidic residues. The segment at 96-121 (YQCPYCSDPTVFSHSDALGRHIYTIH) adopts a C2H2-type; degenerate zinc-finger fold.

It localises to the secreted. The protein localises to the host nucleus. In terms of biological role, probable secreted effector that translocates into the nuclei of host cells to reprogram the expression of targeted genes by binding on effector binding elements in rice. The protein is Host transcription reprogramming factor 5 of Pyricularia oryzae (strain 70-15 / ATCC MYA-4617 / FGSC 8958) (Rice blast fungus).